The chain runs to 497 residues: ATP synthase subunit alpha 2 (497 aa).

167 to 174 contacts ATP; sequence GERATGKT.

Belongs to the ATPase alpha/beta chains family. In terms of assembly, F-type ATPases have 2 components, CF(1) - the catalytic core - and CF(0) - the membrane proton channel. CF(1) has five subunits: alpha(3), beta(3), gamma(1), delta(1), epsilon(1). CF(0) has four main subunits: a(1), b(1), b'(1) and c(9-12).

Its subcellular location is the cell inner membrane. The enzyme catalyses ATP + H2O + 4 H(+)(in) = ADP + phosphate + 5 H(+)(out). Produces ATP from ADP in the presence of a proton gradient across the membrane. The alpha chain is a regulatory subunit. The chain is ATP synthase subunit alpha 2 from Cereibacter sphaeroides (strain ATCC 17029 / ATH 2.4.9) (Rhodobacter sphaeroides).